The chain runs to 262 residues: Thiazole synthase (262 aa).

The Schiff-base intermediate with DXP role is filled by Lys-97. 1-deoxy-D-xylulose 5-phosphate contacts are provided by residues Gly-158, 185-186, and 207-208; these read AG and NT. A disordered region spans residues 243–262; the sequence is DKAQASTPTVGQPFWHSAEY.

It belongs to the ThiG family. In terms of assembly, homotetramer. Forms heterodimers with either ThiH or ThiS.

It localises to the cytoplasm. The enzyme catalyses [ThiS sulfur-carrier protein]-C-terminal-Gly-aminoethanethioate + 2-iminoacetate + 1-deoxy-D-xylulose 5-phosphate = [ThiS sulfur-carrier protein]-C-terminal Gly-Gly + 2-[(2R,5Z)-2-carboxy-4-methylthiazol-5(2H)-ylidene]ethyl phosphate + 2 H2O + H(+). Its pathway is cofactor biosynthesis; thiamine diphosphate biosynthesis. Catalyzes the rearrangement of 1-deoxy-D-xylulose 5-phosphate (DXP) to produce the thiazole phosphate moiety of thiamine. Sulfur is provided by the thiocarboxylate moiety of the carrier protein ThiS. In vitro, sulfur can be provided by H(2)S. In Neisseria meningitidis serogroup A / serotype 4A (strain DSM 15465 / Z2491), this protein is Thiazole synthase.